The sequence spans 407 residues: Phosphopentomutase (407 aa).

Positions 10, 306, 311, 347, 348, and 359 each coordinate Mn(2+).

Belongs to the phosphopentomutase family. The cofactor is Mn(2+).

The protein resides in the cytoplasm. The catalysed reaction is 2-deoxy-alpha-D-ribose 1-phosphate = 2-deoxy-D-ribose 5-phosphate. It carries out the reaction alpha-D-ribose 1-phosphate = D-ribose 5-phosphate. The protein operates within carbohydrate degradation; 2-deoxy-D-ribose 1-phosphate degradation; D-glyceraldehyde 3-phosphate and acetaldehyde from 2-deoxy-alpha-D-ribose 1-phosphate: step 1/2. In terms of biological role, isomerase that catalyzes the conversion of deoxy-ribose 1-phosphate (dRib-1-P) and ribose 1-phosphate (Rib-1-P) to deoxy-ribose 5-phosphate (dRib-5-P) and ribose 5-phosphate (Rib-5-P), respectively. In Escherichia coli (strain UTI89 / UPEC), this protein is Phosphopentomutase.